Consider the following 333-residue polypeptide: Fructose-1,6-bisphosphatase class 1 1 (333 aa).

4 residues coordinate Mg(2+): glutamate 81, aspartate 100, leucine 102, and aspartate 103. Substrate contacts are provided by residues aspartate 103–serine 106 and asparagine 191. A Mg(2+)-binding site is contributed by glutamate 263.

It belongs to the FBPase class 1 family. As to quaternary structure, homotetramer. It depends on Mg(2+) as a cofactor.

It is found in the cytoplasm. The catalysed reaction is beta-D-fructose 1,6-bisphosphate + H2O = beta-D-fructose 6-phosphate + phosphate. Its pathway is carbohydrate biosynthesis; Calvin cycle. This is Fructose-1,6-bisphosphatase class 1 1 from Cereibacter sphaeroides (strain ATCC 17029 / ATH 2.4.9) (Rhodobacter sphaeroides).